A 424-amino-acid chain; its full sequence is UPF0761 membrane protein Smlt0865 (424 aa).

Helical transmembrane passes span 48–68 (VFAL…FPVF), 101–121 (SAGQ…LITL), 144–164 (FLVY…SLAV), 181–201 (WLAE…CITL), 216–236 (AVPG…GIGA), and 251–271 (VAFV…VLLG).

Belongs to the UPF0761 family.

It is found in the cell inner membrane. This Stenotrophomonas maltophilia (strain K279a) protein is UPF0761 membrane protein Smlt0865.